A 187-amino-acid chain; its full sequence is Elongation factor P (187 aa).

This sequence belongs to the elongation factor P family.

It localises to the cytoplasm. Its pathway is protein biosynthesis; polypeptide chain elongation. In terms of biological role, involved in peptide bond synthesis. Stimulates efficient translation and peptide-bond synthesis on native or reconstituted 70S ribosomes in vitro. Probably functions indirectly by altering the affinity of the ribosome for aminoacyl-tRNA, thus increasing their reactivity as acceptors for peptidyl transferase. This chain is Elongation factor P, found in Bifidobacterium animalis subsp. lactis (strain AD011).